The following is a 149-amino-acid chain: Putative pre-16S rRNA nuclease (149 aa).

Belongs to the YqgF nuclease family.

It localises to the cytoplasm. In terms of biological role, could be a nuclease involved in processing of the 5'-end of pre-16S rRNA. This chain is Putative pre-16S rRNA nuclease, found in Heliobacterium modesticaldum (strain ATCC 51547 / Ice1).